The sequence spans 196 residues: ATP-dependent Clp protease proteolytic subunit (196 aa).

Catalysis depends on S96, which acts as the Nucleophile. H121 is an active-site residue.

Belongs to the peptidase S14 family. In terms of assembly, fourteen ClpP subunits assemble into 2 heptameric rings which stack back to back to give a disk-like structure with a central cavity, resembling the structure of eukaryotic proteasomes.

It localises to the cytoplasm. The catalysed reaction is Hydrolysis of proteins to small peptides in the presence of ATP and magnesium. alpha-casein is the usual test substrate. In the absence of ATP, only oligopeptides shorter than five residues are hydrolyzed (such as succinyl-Leu-Tyr-|-NHMec, and Leu-Tyr-Leu-|-Tyr-Trp, in which cleavage of the -Tyr-|-Leu- and -Tyr-|-Trp bonds also occurs).. Cleaves peptides in various proteins in a process that requires ATP hydrolysis. Has a chymotrypsin-like activity. Plays a major role in the degradation of misfolded proteins. The protein is ATP-dependent Clp protease proteolytic subunit of Streptococcus pneumoniae (strain P1031).